Consider the following 173-residue polypeptide: MIDSESLIPVGKLVATHGIRGMLKLHSYSGSVESLCTCDSVILRSRDGALNRFEPKPVLPRPGKFLIGFKGVDHIDQAQTLVGSEICLRRDQLPEPEEDEYYWCDLIGLEVATVEGMALGVLEEIFKAGSSDIYVVRGAGREYLIPAIADVIHSVDLEMGRMLITPLEGLLDL.

Positions 98–170 (EDEYYWCDLI…RMLITPLEGL (73 aa)) constitute a PRC barrel domain.

It belongs to the RimM family. As to quaternary structure, binds ribosomal protein uS19.

Its subcellular location is the cytoplasm. An accessory protein needed during the final step in the assembly of 30S ribosomal subunit, possibly for assembly of the head region. Essential for efficient processing of 16S rRNA. May be needed both before and after RbfA during the maturation of 16S rRNA. It has affinity for free ribosomal 30S subunits but not for 70S ribosomes. The polypeptide is Ribosome maturation factor RimM (Pelobacter propionicus (strain DSM 2379 / NBRC 103807 / OttBd1)).